A 273-amino-acid polypeptide reads, in one-letter code: Ribosomal RNA small subunit methyltransferase A (273 aa).

Asn19, Leu21, Gly46, Glu67, Asp92, and Asn113 together coordinate S-adenosyl-L-methionine.

Belongs to the class I-like SAM-binding methyltransferase superfamily. rRNA adenine N(6)-methyltransferase family. RsmA subfamily.

The protein resides in the cytoplasm. It carries out the reaction adenosine(1518)/adenosine(1519) in 16S rRNA + 4 S-adenosyl-L-methionine = N(6)-dimethyladenosine(1518)/N(6)-dimethyladenosine(1519) in 16S rRNA + 4 S-adenosyl-L-homocysteine + 4 H(+). Specifically dimethylates two adjacent adenosines (A1518 and A1519) in the loop of a conserved hairpin near the 3'-end of 16S rRNA in the 30S particle. May play a critical role in biogenesis of 30S subunits. The chain is Ribosomal RNA small subunit methyltransferase A from Hahella chejuensis (strain KCTC 2396).